The primary structure comprises 383 residues: 1-deoxy-D-xylulose 5-phosphate reductoisomerase (383 aa).

NADPH is bound by residues Thr-10, Gly-11, Ser-12, Ile-13, Gly-36, Lys-37, Asn-38, and Asn-122. Residue Lys-123 coordinates 1-deoxy-D-xylulose 5-phosphate. Glu-124 is a binding site for NADPH. Asp-148 is a binding site for Mn(2+). 4 residues coordinate 1-deoxy-D-xylulose 5-phosphate: Ser-149, Glu-150, Ser-174, and His-197. Glu-150 is a Mn(2+) binding site. Residue Gly-203 coordinates NADPH. Positions 210, 215, 216, and 219 each coordinate 1-deoxy-D-xylulose 5-phosphate. Glu-219 is a binding site for Mn(2+).

This sequence belongs to the DXR family. It depends on Mg(2+) as a cofactor. Mn(2+) is required as a cofactor.

It catalyses the reaction 2-C-methyl-D-erythritol 4-phosphate + NADP(+) = 1-deoxy-D-xylulose 5-phosphate + NADPH + H(+). It participates in isoprenoid biosynthesis; isopentenyl diphosphate biosynthesis via DXP pathway; isopentenyl diphosphate from 1-deoxy-D-xylulose 5-phosphate: step 1/6. Catalyzes the NADPH-dependent rearrangement and reduction of 1-deoxy-D-xylulose-5-phosphate (DXP) to 2-C-methyl-D-erythritol 4-phosphate (MEP). In Bacillus velezensis (strain DSM 23117 / BGSC 10A6 / LMG 26770 / FZB42) (Bacillus amyloliquefaciens subsp. plantarum), this protein is 1-deoxy-D-xylulose 5-phosphate reductoisomerase.